Consider the following 449-residue polypeptide: Probable glycine dehydrogenase (decarboxylating) subunit 1 (449 aa).

The protein belongs to the GcvP family. N-terminal subunit subfamily. As to quaternary structure, the glycine cleavage system is composed of four proteins: P, T, L and H. In this organism, the P 'protein' is a heterodimer of two subunits.

The enzyme catalyses N(6)-[(R)-lipoyl]-L-lysyl-[glycine-cleavage complex H protein] + glycine + H(+) = N(6)-[(R)-S(8)-aminomethyldihydrolipoyl]-L-lysyl-[glycine-cleavage complex H protein] + CO2. The glycine cleavage system catalyzes the degradation of glycine. The P protein binds the alpha-amino group of glycine through its pyridoxal phosphate cofactor; CO(2) is released and the remaining methylamine moiety is then transferred to the lipoamide cofactor of the H protein. This is Probable glycine dehydrogenase (decarboxylating) subunit 1 from Solibacter usitatus (strain Ellin6076).